The chain runs to 802 residues: Oligophrenin-1 (802 aa).

A PH domain is found at 265 to 368 (QPTIEGYLYT…WMEAMDGKEP (104 aa)). Residues 380 to 564 (MELNEVGFKF…ILIEHFGKIY (185 aa)) form the Rho-GAP domain. Disordered regions lie at residues 641-663 (QKSG…CQTE) and 682-802 (TKAI…GDES). Basic and acidic residues predominate over residues 716 to 732 (HHKEGDTDCFSKVRPPG). The segment covering 751 to 768 (SSTSQKPESKPETVSSNA) has biased composition (polar residues).

As to quaternary structure, interacts with HOMER1. Interacts with AMPA receptor complexes. Interacts with SH3GL2 (endophilin-A1). Interacts (via C-terminus) with NR1D1. As to expression, high expression in brain, particularly in the cerebellum, hippocampus, thalamus, frontal lobes, sensory cortex. Found in the myelin sheaths of peripheral nerves, chromaffin cells within the adrenal medulla, and in extra-adrenal chromaffin cells associated with celiac ganglia.

The protein localises to the postsynapse. The protein resides in the presynapse. Its subcellular location is the cell projection. It is found in the axon. It localises to the dendritic spine. The protein localises to the dendrite. The protein resides in the cytoplasm. In terms of biological role, stimulates GTP hydrolysis of members of the Rho family. Its action on RHOA activity and signaling is implicated in growth and stabilization of dendritic spines, and therefore in synaptic function, in hippocampal neurons. Critical for the stabilization of AMPA receptors at postsynaptic sites. Critical for the regulation of synaptic vesicle endocytosis at pre-synaptic terminals. Required for the localization of NR1D1 to dendrites, can suppress its repressor activity and protect it from proteasomal degradation. This chain is Oligophrenin-1 (Ophn1), found in Rattus norvegicus (Rat).